Consider the following 394-residue polypeptide: Ribulose bisphosphate carboxylase large chain (394 aa).

Position 5 is an N6,N6,N6-trimethyllysine (lysine 5). Substrate is bound by residues asparagine 114 and threonine 164. Lysine 166 acts as the Proton acceptor in catalysis. Lysine 168 provides a ligand contact to substrate. Lysine 192, aspartate 194, and glutamate 195 together coordinate Mg(2+). Lysine 192 bears the N6-carboxylysine mark. Histidine 285 functions as the Proton acceptor in the catalytic mechanism. Residues arginine 286, histidine 318, and serine 370 each contribute to the substrate site.

Belongs to the RuBisCO large chain family. Type I subfamily. In terms of assembly, heterohexadecamer of 8 large chains and 8 small chains. Mg(2+) serves as cofactor.

The protein resides in the plastid. The protein localises to the chloroplast. It catalyses the reaction 2 (2R)-3-phosphoglycerate + 2 H(+) = D-ribulose 1,5-bisphosphate + CO2 + H2O. The catalysed reaction is D-ribulose 1,5-bisphosphate + O2 = 2-phosphoglycolate + (2R)-3-phosphoglycerate + 2 H(+). RuBisCO catalyzes two reactions: the carboxylation of D-ribulose 1,5-bisphosphate, the primary event in carbon dioxide fixation, as well as the oxidative fragmentation of the pentose substrate in the photorespiration process. Both reactions occur simultaneously and in competition at the same active site. This is Ribulose bisphosphate carboxylase large chain (rbcL) from Victoria cruziana (Santa Cruz water lily).